The following is a 273-amino-acid chain: 4-hydroxy-tetrahydrodipicolinate reductase (273 aa).

Residues 11 to 16 (GATGKM) and 106 to 108 (GTT) contribute to the NAD(+) site. The Proton donor/acceptor role is filled by histidine 162. Histidine 163 serves as a coordination point for (S)-2,3,4,5-tetrahydrodipicolinate. Lysine 166 acts as the Proton donor in catalysis. Residue 172-173 (GT) coordinates (S)-2,3,4,5-tetrahydrodipicolinate.

This sequence belongs to the DapB family.

The protein localises to the cytoplasm. It catalyses the reaction (S)-2,3,4,5-tetrahydrodipicolinate + NAD(+) + H2O = (2S,4S)-4-hydroxy-2,3,4,5-tetrahydrodipicolinate + NADH + H(+). The enzyme catalyses (S)-2,3,4,5-tetrahydrodipicolinate + NADP(+) + H2O = (2S,4S)-4-hydroxy-2,3,4,5-tetrahydrodipicolinate + NADPH + H(+). It functions in the pathway amino-acid biosynthesis; L-lysine biosynthesis via DAP pathway; (S)-tetrahydrodipicolinate from L-aspartate: step 4/4. In terms of biological role, catalyzes the conversion of 4-hydroxy-tetrahydrodipicolinate (HTPA) to tetrahydrodipicolinate. In Synechococcus sp. (strain ATCC 27144 / PCC 6301 / SAUG 1402/1) (Anacystis nidulans), this protein is 4-hydroxy-tetrahydrodipicolinate reductase.